Here is a 354-residue protein sequence, read N- to C-terminus: Protein-glutamate methylesterase/protein-glutamine glutaminase 2 (354 aa).

Positions 3–120 (RVVVVDDSMS…PADLADYARD (118 aa)) constitute a Response regulatory domain. Asp54 is subject to 4-aspartylphosphate. The 191-residue stretch at 164-354 (ATRLSRVIAI…MGARLSEALQ (191 aa)) folds into the CheB-type methylesterase domain. Catalysis depends on residues Ser176, His202, and Asp298.

The protein belongs to the CheB family. Post-translationally, phosphorylated by CheA. Phosphorylation of the N-terminal regulatory domain activates the methylesterase activity.

Its subcellular location is the cytoplasm. It catalyses the reaction [protein]-L-glutamate 5-O-methyl ester + H2O = L-glutamyl-[protein] + methanol + H(+). The enzyme catalyses L-glutaminyl-[protein] + H2O = L-glutamyl-[protein] + NH4(+). Involved in chemotaxis. Part of a chemotaxis signal transduction system that modulates chemotaxis in response to various stimuli. Catalyzes the demethylation of specific methylglutamate residues introduced into the chemoreceptors (methyl-accepting chemotaxis proteins or MCP) by CheR. Also mediates the irreversible deamidation of specific glutamine residues to glutamic acid. The polypeptide is Protein-glutamate methylesterase/protein-glutamine glutaminase 2 (Burkholderia thailandensis (strain ATCC 700388 / DSM 13276 / CCUG 48851 / CIP 106301 / E264)).